The following is a 1040-amino-acid chain: Multidrug resistance protein MdtB (1040 aa).

12 helical membrane passes run 16–36 (FIMRPVATTLLMVAILLAGII), 347–367 (LMMAIALVVMIIYLFLRNIPA), 369–389 (IIPGVAVPLSLIGTFAVMVFL), 396–416 (LTLMALTIATGFVVDDAIVVI), 440–460 (IGFTIISLTFSLIAVLIPLLF), 472–492 (FAITLAVAILISAVVSLTLTP), 537–557 (WLTLSVALSTLLLSVLLWVFI), 863–883 (LGSTVWLIVAAVVAMYIVLGI), 888–908 (FIHPITILSTLPTAGVGALLA), 911–931 (IAGSELDVIAIIGIILLIGIV), 968–988 (ILMTTLAALLGALPLMLSTGV), and 998–1018 (IGMVGGLIVSQVLTLFTTPVI).

Belongs to the resistance-nodulation-cell division (RND) (TC 2.A.6) family. MdtB subfamily. In terms of assembly, part of a tripartite efflux system composed of MdtA, MdtB and MdtC. MdtB forms a heteromultimer with MdtC.

It localises to the cell inner membrane. The MdtABC tripartite complex confers resistance against novobiocin and deoxycholate. The chain is Multidrug resistance protein MdtB from Escherichia coli O81 (strain ED1a).